The primary structure comprises 262 residues: tRNA pseudouridine synthase A (262 aa).

Residue aspartate 52 is the Nucleophile of the active site. Position 103 (tyrosine 103) interacts with substrate.

The protein belongs to the tRNA pseudouridine synthase TruA family.

The enzyme catalyses uridine(38/39/40) in tRNA = pseudouridine(38/39/40) in tRNA. Its function is as follows. Formation of pseudouridine at positions 38, 39 and 40 in the anticodon stem and loop of transfer RNAs. This is tRNA pseudouridine synthase A from Methanococcus maripaludis (strain C6 / ATCC BAA-1332).